The primary structure comprises 429 residues: Ribosomal RNA small subunit methyltransferase B (429 aa).

S-adenosyl-L-methionine is bound by residues 254-260 (CAAPGGK), Asp277, Asp303, and Asp322. Cys375 acts as the Nucleophile in catalysis.

This sequence belongs to the class I-like SAM-binding methyltransferase superfamily. RsmB/NOP family.

It localises to the cytoplasm. It catalyses the reaction cytidine(967) in 16S rRNA + S-adenosyl-L-methionine = 5-methylcytidine(967) in 16S rRNA + S-adenosyl-L-homocysteine + H(+). Specifically methylates the cytosine at position 967 (m5C967) of 16S rRNA. This is Ribosomal RNA small subunit methyltransferase B from Shigella sonnei (strain Ss046).